Consider the following 159-residue polypeptide: SsrA-binding protein (159 aa).

The protein belongs to the SmpB family.

The protein localises to the cytoplasm. Required for rescue of stalled ribosomes mediated by trans-translation. Binds to transfer-messenger RNA (tmRNA), required for stable association of tmRNA with ribosomes. tmRNA and SmpB together mimic tRNA shape, replacing the anticodon stem-loop with SmpB. tmRNA is encoded by the ssrA gene; the 2 termini fold to resemble tRNA(Ala) and it encodes a 'tag peptide', a short internal open reading frame. During trans-translation Ala-aminoacylated tmRNA acts like a tRNA, entering the A-site of stalled ribosomes, displacing the stalled mRNA. The ribosome then switches to translate the ORF on the tmRNA; the nascent peptide is terminated with the 'tag peptide' encoded by the tmRNA and targeted for degradation. The ribosome is freed to recommence translation, which seems to be the essential function of trans-translation. The polypeptide is SsrA-binding protein (Coxiella burnetii (strain RSA 331 / Henzerling II)).